The chain runs to 141 residues: Nucleoside diphosphate kinase (141 aa).

Residues lysine 11, phenylalanine 59, arginine 87, threonine 93, arginine 104, and asparagine 114 each contribute to the ATP site. Histidine 117 functions as the Pros-phosphohistidine intermediate in the catalytic mechanism.

The protein belongs to the NDK family. It depends on Mg(2+) as a cofactor.

Its subcellular location is the cytoplasm. It carries out the reaction a 2'-deoxyribonucleoside 5'-diphosphate + ATP = a 2'-deoxyribonucleoside 5'-triphosphate + ADP. It catalyses the reaction a ribonucleoside 5'-diphosphate + ATP = a ribonucleoside 5'-triphosphate + ADP. Functionally, major role in the synthesis of nucleoside triphosphates other than ATP. The ATP gamma phosphate is transferred to the NDP beta phosphate via a ping-pong mechanism, using a phosphorylated active-site intermediate. The chain is Nucleoside diphosphate kinase from Staphylothermus marinus (strain ATCC 43588 / DSM 3639 / JCM 9404 / F1).